The primary structure comprises 124 residues: LOB domain-containing protein 9 (124 aa).

The LOB domain occupies 11–113 (APCALCTTKN…IYLNELKEKI (103 aa)).

Belongs to the LOB domain-containing protein family.

The sequence is that of LOB domain-containing protein 9 (LBD9) from Arabidopsis thaliana (Mouse-ear cress).